Reading from the N-terminus, the 354-residue chain is LAS seventeen-binding protein 5 (354 aa).

A VHS domain is found at 15 to 161 (TIFRIVSSRD…LGQTVKQRYS (147 aa)). 2 disordered regions span residues 160–184 (YSKS…DDSA) and 296–354 (SAQD…HNKI). Positions 296 to 310 (SAQDDSSDESDHGSY) are enriched in basic and acidic residues.

The protein belongs to the LSB5 family. As to quaternary structure, interacts with SLA1 and LAS17.

The protein localises to the cytoplasm. It is found in the cell cortex. The protein resides in the cytoskeleton. In terms of biological role, essential for the organization of the actin cytoskeleton, fluid phase endocytosis and vesicle trafficking, together with YSC84. This is LAS seventeen-binding protein 5 (LSB5) from Saccharomyces cerevisiae (strain ATCC 204508 / S288c) (Baker's yeast).